A 142-amino-acid polypeptide reads, in one-letter code: AP-2 complex subunit sigma (142 aa).

The protein belongs to the adaptor complexes small subunit family. In terms of assembly, adaptor protein complex 2 (AP-2) is a heterotetramer composed of two large adaptins (alpha-type and beta-type subunits), a medium adaptin (mu-type subunit) and a small adaptin (sigma-type subunit).

Its subcellular location is the cell membrane. It localises to the membrane. It is found in the coated pit. Functionally, subunit of the adaptor protein complex 2 (AP-2). Adaptor protein complexes function in protein transport via transport vesicles in different membrane traffic pathways. Adaptor protein complexes are vesicle coat components and appear to be involved in cargo selection and vesicle formation. AP-2 is involved in clathrin-dependent endocytosis in which cargo proteins are incorporated into vesicles surrounded by clathrin (clathrin-coated vesicles, CCVs) which are destined for fusion with the early endosome. The complex binds polyphosphoinositides. The sequence is that of AP-2 complex subunit sigma (AP17) from Arabidopsis thaliana (Mouse-ear cress).